A 196-amino-acid polypeptide reads, in one-letter code: Cupin-domain-containing oxidoreductase srdB (196 aa).

Residues 92–156 form the Cupin type-2 domain; it reads DFAPGCKSNM…TSDEKPARML (65 aa).

Belongs to the virC family.

In terms of biological role, cupin-domain-containing oxidoreductase; part of the gene cluster that mediates the biosynthesis of sordarial, a salicylic aldehyde structurally related to the phytotoxin pyriculol. The most interesting aspect of this pathway is formation of an aromatic product from the highly reducing polyketide synthase srdA. SrdA synthesizes a reduced polyketide chain from one molecule of acetyl-CoA and five molecules of malonyl-CoA. The polyketide chain is then reductively released as an aldehyde. The oxidoreductases srdC, srdD and srdE then oxidize one of the hydroxy groups to facilitate the intramolecular aldol condensation, followed by dehydration to yield a salicylic aldehyde. This aldehyde can undergo facile reduction by endogenous reductases to yield the alcohol 1-hydroxy-2-hydroxymethyl-3-pent-1,3-dienylbenzene. The flavin-dependent srdI counteract against the propensity of the aldehydes to be reduced under physiological conditions and is responsible for reoxidizing 1-hydroxy-2-hydroxymethyl-3-pent-1,3-dienylbenzene back to the salicylic aldehyde. This salicylic aldehyde is then selectively epoxidized by the cupin-domain-containing oxidoreductase srdB to yield the epoxide, which can be hydrolyzed stereoselectively by the hydrolase srdG to give the final product sordarial. This is Cupin-domain-containing oxidoreductase srdB from Neurospora crassa (strain ATCC 24698 / 74-OR23-1A / CBS 708.71 / DSM 1257 / FGSC 987).